Here is a 311-residue protein sequence, read N- to C-terminus: Porphobilinogen deaminase (311 aa).

The residue at position 242 (C242) is an S-(dipyrrolylmethanemethyl)cysteine.

Belongs to the HMBS family. In terms of assembly, monomer. Requires dipyrromethane as cofactor.

It catalyses the reaction 4 porphobilinogen + H2O = hydroxymethylbilane + 4 NH4(+). Its pathway is porphyrin-containing compound metabolism; protoporphyrin-IX biosynthesis; coproporphyrinogen-III from 5-aminolevulinate: step 2/4. In terms of biological role, tetrapolymerization of the monopyrrole PBG into the hydroxymethylbilane pre-uroporphyrinogen in several discrete steps. The chain is Porphobilinogen deaminase (hemC) from Neisseria meningitidis serogroup B (strain ATCC BAA-335 / MC58).